The primary structure comprises 228 residues: Triosephosphate isomerase (228 aa).

11–13 serves as a coordination point for substrate; the sequence is NFK. The active-site Electrophile is the H95. E143 (proton acceptor) is an active-site residue. Residues I148, G183, and 204–205 each bind substrate; that span reads AS.

Belongs to the triosephosphate isomerase family. As to quaternary structure, homotetramer; dimer of dimers.

Its subcellular location is the cytoplasm. The enzyme catalyses D-glyceraldehyde 3-phosphate = dihydroxyacetone phosphate. The protein operates within carbohydrate biosynthesis; gluconeogenesis. Its pathway is carbohydrate degradation; glycolysis; D-glyceraldehyde 3-phosphate from glycerone phosphate: step 1/1. Involved in the gluconeogenesis. Catalyzes stereospecifically the conversion of dihydroxyacetone phosphate (DHAP) to D-glyceraldehyde-3-phosphate (G3P). This Pyrococcus horikoshii (strain ATCC 700860 / DSM 12428 / JCM 9974 / NBRC 100139 / OT-3) protein is Triosephosphate isomerase.